The chain runs to 408 residues: Phosphoglycerate kinase (408 aa).

Substrate is bound by residues 24–26, Arg-40, 63–66, Arg-120, and Arg-160; these read DIN and HQGR. ATP-binding positions include Glu-331 and 357-360; that span reads GGHM.

Belongs to the phosphoglycerate kinase family.

It localises to the cytoplasm. It catalyses the reaction (2R)-3-phosphoglycerate + ATP = (2R)-3-phospho-glyceroyl phosphate + ADP. It functions in the pathway carbohydrate degradation; glycolysis; pyruvate from D-glyceraldehyde 3-phosphate: step 2/5. In Saccharolobus solfataricus (strain ATCC 35092 / DSM 1617 / JCM 11322 / P2) (Sulfolobus solfataricus), this protein is Phosphoglycerate kinase (pgk).